The primary structure comprises 221 residues: Eukaryotic translation initiation factor NCBP (221 aa).

It belongs to the eukaryotic initiation factor 4E family. In terms of assembly, EIF4F is a multi-subunit complex, the composition of which varies with external and internal environmental conditions. It is composed of at least EIF4A, EIF4E and EIF4G. EIF4E is also known to interact with other partners. In higher plants two isoforms of EIF4F have been identified, named isoform EIF4F and isoform EIF(iso)4F. Isoform EIF4F has subunits p220 and p26, whereas isoform EIF(iso)4F has subunits p82 and p28.

Its function is as follows. Recognizes and binds the 7-methylguanosine-containing mRNA cap during an early step in the initiation of protein synthesis and facilitates ribosome binding by inducing the unwinding of the mRNAs secondary structures. In Arabidopsis thaliana (Mouse-ear cress), this protein is Eukaryotic translation initiation factor NCBP (NCBP).